Consider the following 188-residue polypeptide: FLFARTMIGVFKNIEYMCSRTNSKTWGKEAWKKIVVCVVSDGRAKINQRTKAVLAGLGVYQDGIAKQQVNGKDVTAHIYEYTTQIGMELKGTQVHLKPRSGVPVQMIFCLKEKNQKKINSHRWFFQAFGRVLDPNICVLLDAGTKPGRDSIYHLWRAFDLHPMCGGACGEIKTMLSHGKKLINPLVAA.

This sequence belongs to the chitin synthase family. Class I subfamily.

The protein localises to the cell membrane. The catalysed reaction is [(1-&gt;4)-N-acetyl-beta-D-glucosaminyl](n) + UDP-N-acetyl-alpha-D-glucosamine = [(1-&gt;4)-N-acetyl-beta-D-glucosaminyl](n+1) + UDP + H(+). Its function is as follows. Polymerizes chitin, a structural polymer of the cell wall and septum, by transferring the sugar moiety of UDP-GlcNAc to the non-reducing end of the growing chitin polymer. The chain is Chitin synthase 1 (CHS1) from Ajellomyces dermatitidis (Blastomyces dermatitidis).